A 209-amino-acid chain; its full sequence is A-type ATP synthase subunit D (209 aa).

The protein belongs to the V-ATPase D subunit family. In terms of assembly, has multiple subunits, A(3), B(3), C, D, E, F, G, I and K(x); there may be a few other subunits as well.

Its subcellular location is the cell membrane. In terms of biological role, component of the A-type ATP synthase that produces ATP from ADP in the presence of a proton gradient across the membrane. This chain is A-type ATP synthase subunit D, found in Methanosarcina mazei (strain ATCC BAA-159 / DSM 3647 / Goe1 / Go1 / JCM 11833 / OCM 88) (Methanosarcina frisia).